The sequence spans 467 residues: Calcium-binding protein P (467 aa).

Composition is skewed to pro residues over residues 1–10 (MQNPQNPPPA) and 45–62 (QYPP…PPYP). The disordered stretch occupies residues 1–311 (MQNPQNPPPA…GAYPGQPPMG (311 aa)). An XYPPX motif is present at residues 45-49 (QYPPQ). Low complexity predominate over residues 63–74 (GTQQPGAPGAPG). 17 consecutive short sequence motifs (XYPPX) follow at residues 75 to 79 (QYPPQ), 83 to 87 (QYPPQ), 94 to 98 (QYPPQ), 104 to 108 (GYPPQ), 115 to 119 (QYPPQ), 125 to 129 (GYPPQ), 136 to 140 (QYPPQ), 146 to 150 (QYPPQ), 157 to 161 (QYPPQ), 165 to 169 (QYPPQ), 176 to 180 (AYPPQ), 187 to 191 (AYPPQ), 221 to 225 (GVPPQ), 238 to 242 (AYPPQ), 247 to 251 (AYPPQ), 256 to 260 (AYPPQ), and 275 to 279 (AYPPQ). Composition is skewed to pro residues over residues 75 to 109 (QYPP…PPQQ) and 118 to 131 (PQQP…PQQP). A compositionally biased stretch (low complexity) spans 132 to 145 (GAPGQYPPQQGQPG). 2 stretches are compositionally biased toward low complexity: residues 153–193 (GQPG…PQQG) and 215–246 (AYPG…GQPG). Residues 253–311 (QPGAYPPQQQQVAYPGQQPPMGAYPPQQGAYPGQQGAYPGQQGAYPGQQGAYPGQPPMG) show a composition bias toward low complexity. 2 consecutive EF-hand domains span residues 399–434 (QKMM…LGYY) and 435–467 (FSKG…WSMQ). Ca(2+)-binding residues include aspartate 412, asparagine 414, serine 416, threonine 418, and glutamate 423.

In Dictyostelium discoideum (Social amoeba), this protein is Calcium-binding protein P (cbpP).